The chain runs to 569 residues: Arginine--tRNA ligase (569 aa).

A 'HIGH' region motif is present at residues 128 to 138 (ANPTGPLHVGH).

It belongs to the class-I aminoacyl-tRNA synthetase family. As to quaternary structure, monomer.

It localises to the cytoplasm. It carries out the reaction tRNA(Arg) + L-arginine + ATP = L-arginyl-tRNA(Arg) + AMP + diphosphate. The polypeptide is Arginine--tRNA ligase (Paracidovorax citrulli (strain AAC00-1) (Acidovorax citrulli)).